The chain runs to 227 residues: Prolactin-4A1 (227 aa).

The first 31 residues, 1–31 (MHLSLTPQWSSWTVLLLLVSNLLLWENTASA), serve as a signal peptide directing secretion. Disulfide bonds link cysteine 87–cysteine 203 and cysteine 220–cysteine 227. Asparagine 175 is a glycosylation site (N-linked (GlcNAc...) asparagine).

This sequence belongs to the somatotropin/prolactin family. As to expression, expressed specifically in placenta. Expressed in both trophoblast giant cells and spongiotrophoblast cells.

The protein resides in the secreted. The polypeptide is Prolactin-4A1 (Prl4a1) (Mus musculus (Mouse)).